A 553-amino-acid chain; its full sequence is Solute carrier family 22 member 2 (553 aa).

The Cytoplasmic portion of the chain corresponds to 1–21; the sequence is MPTVDDILEHIGEFHLFQKQT. Residues 22–42 traverse the membrane as a helical segment; the sequence is FFLLALLSGAFTPIYVGIVFL. Residues 43 to 150 are Extracellular-facing; the sequence is GFTPNHHCRS…LVCAHSWMLD (108 aa). A glycan (N-linked (GlcNAc...) asparagine) is linked at N71. Residues 151-171 traverse the membrane as a helical segment; sequence LFQSLVNVGFFIGAVGIGYLA. The Cytoplasmic portion of the chain corresponds to 172-177; the sequence is DRFGRK. Residues 178-198 form a helical membrane-spanning segment; sequence FCLLVTILINAISGVLMAISP. Residues 199–210 lie on the Extracellular side of the membrane; the sequence is NYAWMLVFRFLQ. The chain crosses the membrane as a helical span at residues 211–231; sequence GLVSKAGWLIGYILITEFVGL. The Cytoplasmic portion of the chain corresponds to 232–238; it reads GYRRTVG. The chain crosses the membrane as a helical span at residues 239–259; sequence ICYQIAFTVGLLILAGVAYAL. The Extracellular portion of the chain corresponds to 260-263; the sequence is PNWR. The helical transmembrane segment at 264–284 threads the bilayer; that stretch reads WLQFAVTLPNFCFLLYFWCIP. The Proline-rich sequence motif lies at 284-288; sequence PESPR. The Cytoplasmic segment spans residues 285–348; that stretch reads ESPRWLISQN…VRTPQIRKHT (64 aa). The helical transmembrane segment at 349-369 threads the bilayer; sequence LILMYNWFTSSVLYQGLIMHM. Residues 370-375 lie on the Extracellular side of the membrane; it reads GLAGDN. A helical transmembrane segment spans residues 376-396; it reads IYLDFFYSALVEFPAAFIIIL. Residues 397–404 are Cytoplasmic-facing; the sequence is TIDRIGRR. Residues 405 to 425 form a helical membrane-spanning segment; the sequence is YPWAVSNMVAGAACLASVFIP. The Extracellular portion of the chain corresponds to 426 to 432; sequence DDLQWLK. A helical transmembrane segment spans residues 433–453; that stretch reads ITVACLGRMGITIAYEMVCLV. The Cytoplasmic portion of the chain corresponds to 454 to 464; it reads NAELYPTYIRN. A helical transmembrane segment spans residues 465 to 485; the sequence is LAVLVCSSMCDIGGIVTPFLV. The Extracellular portion of the chain corresponds to 486–494; that stretch reads YRLTDIWLE. Residues 495–515 form a helical membrane-spanning segment; it reads FPLVVFAVVGLVAGGLVLLLP. Topologically, residues 516-553 are cytoplasmic; sequence ETKGKALPETIEDAEKMQRPRKKKEKRIYLQVKKAELS.

Belongs to the major facilitator (TC 2.A.1) superfamily. Organic cation transporter (TC 2.A.1.19) family. In terms of processing, tyrosine phosphorylated by tyrosine-protein kinase YES1. Expressed in kidney and ureter. To a lower extent, also expressed in brain and embryo.

It is found in the basolateral cell membrane. The protein resides in the basal cell membrane. It localises to the apical cell membrane. The enzyme catalyses (R)-noradrenaline(out) = (R)-noradrenaline(in). The catalysed reaction is (R)-adrenaline(out) = (R)-adrenaline(in). It carries out the reaction serotonin(out) = serotonin(in). It catalyses the reaction dopamine(out) = dopamine(in). The enzyme catalyses histamine(out) = histamine(in). The catalysed reaction is thiamine(in) = thiamine(out). It carries out the reaction creatinine(in) = creatinine(out). It catalyses the reaction 1-methylnicotinamide(out) = 1-methylnicotinamide(in). The enzyme catalyses guanidine(out) = guanidine(in). The catalysed reaction is choline(out) = choline(in). It carries out the reaction agmatine(out) = agmatine(in). It catalyses the reaction putrescine(out) = putrescine(in). The enzyme catalyses spermidine(in) = spermidine(out). The catalysed reaction is tyramine(in) = tyramine(out). It carries out the reaction L-histidyl-L-proline diketopiperazine(in) = L-histidyl-L-proline diketopiperazine(out). It catalyses the reaction (R)-salsolinol(in) = (R)-salsolinol(out). The enzyme catalyses N-methyl-(R)-salsolinol(in) = N-methyl-(R)-salsolinol(out). The catalysed reaction is acetylcholine(in) = acetylcholine(out). It carries out the reaction prostaglandin F2alpha(out) = prostaglandin F2alpha(in). It catalyses the reaction prostaglandin E2(out) = prostaglandin E2(in). With respect to regulation, tyrosine phosphorylation of the transporter leads to activation of the transport activity. TEA uptake is activated by tyrosine phosphorylation. Inhibited by cGMP, most likely through a cGMP-binding protein that interacts with OCT2. In terms of biological role, electrogenic voltage-dependent transporter that mediates the transport of a variety of organic cations such as endogenous bioactive amines, cationic drugs and xenobiotics. Functions as a Na(+)-independent, bidirectional uniporter. Cation cellular uptake or release is driven by the electrochemical potential, i.e. membrane potential and concentration gradient. However, may also engage electroneutral cation exchange when saturating concentrations of cation substrates are reached. Predominantly expressed at the basolateral membrane of hepatocytes and proximal tubules and involved in the uptake and disposition of cationic compounds by hepatic and renal clearance from the blood flow. Implicated in monoamine neurotransmitters uptake such as histamine, dopamine, adrenaline/epinephrine, noradrenaline/norepinephrine, serotonin and tyramine, thereby supporting a physiological role in the central nervous system by regulating interstitial concentrations of neurotransmitters. Also capable of transporting dopaminergic neuromodulators cyclo(his-pro), salsolinol and N-methyl-salsolinol, thereby involved in the maintenance of dopaminergic cell integrity in the central nervous system. Mediates the bidirectional transport of acetylcholine (ACh) at the apical membrane of ciliated cell in airway epithelium, thereby playing a role in luminal release of ACh from bronchial epithelium. Also transports guanidine and endogenous monoamines such as vitamin B1/thiamine, creatinine and N-1-methylnicotinamide (NMN). Mediates the uptake and efflux of quaternary ammonium compound choline. Mediates the bidirectional transport of polyamine agmatine and the uptake of polyamines putrescine and spermidine. Able to transport non-amine endogenous compounds such as prostaglandin E2 (PGE2) and prostaglandin F2-alpha (PGF2-alpha). Also involved in the uptake of xenobiotic 4-(4-(dimethylamino)styryl)-N-methylpyridinium (ASP). May contribute to regulate the transport of organic compounds in testis across the blood-testis-barrier. The chain is Solute carrier family 22 member 2 from Mus musculus (Mouse).